The following is a 106-amino-acid chain: Nucleoid-associated protein Smlt1015 (106 aa).

The interval 81–106 (IDAESKSKMGSATAGMQLPPGMKLPF) is disordered.

Belongs to the YbaB/EbfC family. As to quaternary structure, homodimer.

The protein localises to the cytoplasm. It is found in the nucleoid. Its function is as follows. Binds to DNA and alters its conformation. May be involved in regulation of gene expression, nucleoid organization and DNA protection. The polypeptide is Nucleoid-associated protein Smlt1015 (Stenotrophomonas maltophilia (strain K279a)).